The following is a 344-amino-acid chain: Fructose-bisphosphate aldolase (344 aa).

A D-glyceraldehyde 3-phosphate-binding site is contributed by S53. The active-site Proton donor is D95. Positions 96, 131, 161, and 212 each coordinate Zn(2+). Dihydroxyacetone phosphate is bound at residue G213. H252 provides a ligand contact to Zn(2+). Residues 253–255 (GGS) and 274–277 (NVDT) contribute to the dihydroxyacetone phosphate site.

It belongs to the class II fructose-bisphosphate aldolase family. It depends on Zn(2+) as a cofactor.

The enzyme catalyses beta-D-fructose 1,6-bisphosphate = D-glyceraldehyde 3-phosphate + dihydroxyacetone phosphate. Its pathway is carbohydrate degradation; glycolysis; D-glyceraldehyde 3-phosphate and glycerone phosphate from D-glucose: step 4/4. In terms of biological role, catalyzes the aldol condensation of dihydroxyacetone phosphate (DHAP or glycerone-phosphate) with glyceraldehyde 3-phosphate (G3P) to form fructose 1,6-bisphosphate (FBP) in gluconeogenesis and the reverse reaction in glycolysis. The polypeptide is Fructose-bisphosphate aldolase (fba) (Corynebacterium glutamicum (strain ATCC 13032 / DSM 20300 / JCM 1318 / BCRC 11384 / CCUG 27702 / LMG 3730 / NBRC 12168 / NCIMB 10025 / NRRL B-2784 / 534)).